The sequence spans 313 residues: MTSIIFMGTPDFSAPILRMLHEEGYDIKAVVTQPDRPVGRKRILTPPPVKAAALELGLPIIQPEKLRGSEELQQILSLQPDIVITAAFGQILPKELLDAPSLGCINVHASLLPKYRGGAPIHQAIIDGEKETGVTIMYMAEKLDAGDIISQRAIPIELDDHTGRVFDKLSMVGRDLLKDTLPSIINRTNNRTVQDETQVTFASNISREQERIDWTNDATTLYNQVRGLHPWPVAYTTFEDGNFKVWWATIGKSKHDTIPGTVVAIAKDHFEVAAGNGTTLALYDVQPAGKKRMTAEEYLRGTGSKLQIGDQFK.

110-113 (SLLP) is a (6S)-5,6,7,8-tetrahydrofolate binding site.

It belongs to the Fmt family.

It carries out the reaction L-methionyl-tRNA(fMet) + (6R)-10-formyltetrahydrofolate = N-formyl-L-methionyl-tRNA(fMet) + (6S)-5,6,7,8-tetrahydrofolate + H(+). Its function is as follows. Attaches a formyl group to the free amino group of methionyl-tRNA(fMet). The formyl group appears to play a dual role in the initiator identity of N-formylmethionyl-tRNA by promoting its recognition by IF2 and preventing the misappropriation of this tRNA by the elongation apparatus. The sequence is that of Methionyl-tRNA formyltransferase from Lysinibacillus sphaericus (strain C3-41).